The primary structure comprises 373 residues: PqqA peptide cyclase (373 aa).

Residues 9–224 enclose the Radical SAM core domain; the sequence is LTKPRWLLAE…QSYKEKVKGR (216 aa). Residues C23, C27, and C30 each contribute to the [4Fe-4S] cluster site.

This sequence belongs to the radical SAM superfamily. PqqE family. As to quaternary structure, interacts with PqqD. The interaction is necessary for activity of PqqE. [4Fe-4S] cluster serves as cofactor.

It carries out the reaction [PQQ precursor protein] + S-adenosyl-L-methionine = E-Y cross-linked-[PQQ precursor protein] + 5'-deoxyadenosine + L-methionine + H(+). It functions in the pathway cofactor biosynthesis; pyrroloquinoline quinone biosynthesis. Functionally, catalyzes the cross-linking of a glutamate residue and a tyrosine residue in the PqqA protein as part of the biosynthesis of pyrroloquinoline quinone (PQQ). This Methylococcus capsulatus (strain ATCC 33009 / NCIMB 11132 / Bath) protein is PqqA peptide cyclase.